The following is a 287-amino-acid chain: 4-hydroxybenzoate octaprenyltransferase (287 aa).

The next 6 membrane-spanning stretches (helical) occupy residues 41 to 61, 89 to 109, 133 to 153, 158 to 178, 202 to 224, and 267 to 287; these read WPLL…GCAM, WEAI…ILPL, FFAI…PMAF, DTVP…SVAY, FGRF…YVWI, and NNWL…LAGS.

This sequence belongs to the UbiA prenyltransferase family. It depends on Mg(2+) as a cofactor.

The protein resides in the cell inner membrane. It carries out the reaction all-trans-octaprenyl diphosphate + 4-hydroxybenzoate = 4-hydroxy-3-(all-trans-octaprenyl)benzoate + diphosphate. The protein operates within cofactor biosynthesis; ubiquinone biosynthesis. Functionally, catalyzes the prenylation of para-hydroxybenzoate (PHB) with an all-trans polyprenyl group. Mediates the second step in the final reaction sequence of ubiquinone-8 (UQ-8) biosynthesis, which is the condensation of the polyisoprenoid side chain with PHB, generating the first membrane-bound Q intermediate 3-octaprenyl-4-hydroxybenzoate. The protein is 4-hydroxybenzoate octaprenyltransferase of Burkholderia lata (strain ATCC 17760 / DSM 23089 / LMG 22485 / NCIMB 9086 / R18194 / 383).